Reading from the N-terminus, the 247-residue chain is 3-oxoacyl-[acyl-carrier-protein] reductase (247 aa).

11–35 (VTGASRGIGKATALALAATGMKVVV) contacts NADP(+). Serine 143 is a binding site for substrate. Tyrosine 156 acts as the Proton acceptor in catalysis.

Belongs to the short-chain dehydrogenases/reductases (SDR) family.

It carries out the reaction a (3R)-hydroxyacyl-[ACP] + NADP(+) = a 3-oxoacyl-[ACP] + NADPH + H(+). The protein operates within lipid metabolism; fatty acid biosynthesis. In terms of biological role, catalyzes the NADPH-dependent reduction of beta-ketoacyl-ACP substrates to beta-hydroxyacyl-ACP products, the first reductive step in the elongation cycle of fatty acid biosynthesis. Is capable of reducing acetoacetyl-CoA, but less well than its paralog PhaB. The chain is 3-oxoacyl-[acyl-carrier-protein] reductase (fabG) from Synechocystis sp. (strain ATCC 27184 / PCC 6803 / Kazusa).